A 310-amino-acid chain; its full sequence is tRNA dimethylallyltransferase (310 aa).

Glycine 14–serine 21 is an ATP binding site. Residue threonine 16–serine 21 participates in substrate binding. 2 interaction with substrate tRNA regions span residues aspartate 39–glutamine 42 and glutamine 163–arginine 167.

This sequence belongs to the IPP transferase family. In terms of assembly, monomer. It depends on Mg(2+) as a cofactor.

The enzyme catalyses adenosine(37) in tRNA + dimethylallyl diphosphate = N(6)-dimethylallyladenosine(37) in tRNA + diphosphate. Functionally, catalyzes the transfer of a dimethylallyl group onto the adenine at position 37 in tRNAs that read codons beginning with uridine, leading to the formation of N6-(dimethylallyl)adenosine (i(6)A). The protein is tRNA dimethylallyltransferase of Brucella suis biovar 1 (strain 1330).